The chain runs to 215 residues: FMN-dependent NADH:quinone oxidoreductase (215 aa).

17-19 is a binding site for FMN; the sequence is SAS.

This sequence belongs to the azoreductase type 1 family. Homodimer. FMN serves as cofactor.

It catalyses the reaction 2 a quinone + NADH + H(+) = 2 a 1,4-benzosemiquinone + NAD(+). It carries out the reaction N,N-dimethyl-1,4-phenylenediamine + anthranilate + 2 NAD(+) = 2-(4-dimethylaminophenyl)diazenylbenzoate + 2 NADH + 2 H(+). Its function is as follows. Quinone reductase that provides resistance to thiol-specific stress caused by electrophilic quinones. Functionally, also exhibits azoreductase activity. Catalyzes the reductive cleavage of the azo bond in aromatic azo compounds to the corresponding amines. In Clostridium botulinum (strain Alaska E43 / Type E3), this protein is FMN-dependent NADH:quinone oxidoreductase.